The primary structure comprises 550 residues: Flagellin (550 aa).

Belongs to the bacterial flagellin family.

It is found in the secreted. The protein resides in the bacterial flagellum. Its function is as follows. Flagellin is the subunit protein which polymerizes to form the filaments of bacterial flagella. This Shigella flexneri protein is Flagellin (fliC).